The following is a 280-amino-acid chain: Virginiamycin B lyase (280 aa).

Residue histidine 215 coordinates substrate. Glutamate 254 serves as a coordination point for Mg(2+). Histidine 256 acts as the Proton acceptor in catalysis. A Mg(2+)-binding site is contributed by glutamate 271.

The protein belongs to the Vgb family. In terms of assembly, monomer. Requires Mg(2+) as cofactor.

Inactivates the type B streptogramin antibiotics by linearizing the lactone ring at the ester linkage, generating a free phenylglycine carboxylate and converting the threonyl moiety into 2-amino-butenoic acid. The chain is Virginiamycin B lyase from Mycobacterium sp. (strain JLS).